The chain runs to 548 residues: Lysine--tRNA ligase (548 aa).

Residues 43-51 (PSGVPHLGN) carry the 'HIGH' region motif. Positions 308–312 (PFSSS) match the 'KMSKS' region motif.

Belongs to the class-I aminoacyl-tRNA synthetase family.

It localises to the cytoplasm. The catalysed reaction is tRNA(Lys) + L-lysine + ATP = L-lysyl-tRNA(Lys) + AMP + diphosphate. In Halobacterium salinarum (strain ATCC 700922 / JCM 11081 / NRC-1) (Halobacterium halobium), this protein is Lysine--tRNA ligase.